The following is a 214-amino-acid chain: Phosphatidylserine decarboxylase proenzyme (214 aa).

The active-site Schiff-base intermediate with substrate; via pyruvic acid is the serine 182. Serine 182 carries the pyruvic acid (Ser); by autocatalysis modification.

This sequence belongs to the phosphatidylserine decarboxylase family. PSD-A subfamily. Heterodimer of a large membrane-associated beta subunit and a small pyruvoyl-containing alpha subunit. Pyruvate is required as a cofactor. Is synthesized initially as an inactive proenzyme. Formation of the active enzyme involves a self-maturation process in which the active site pyruvoyl group is generated from an internal serine residue via an autocatalytic post-translational modification. Two non-identical subunits are generated from the proenzyme in this reaction, and the pyruvate is formed at the N-terminus of the alpha chain, which is derived from the carboxyl end of the proenzyme. The post-translation cleavage follows an unusual pathway, termed non-hydrolytic serinolysis, in which the side chain hydroxyl group of the serine supplies its oxygen atom to form the C-terminus of the beta chain, while the remainder of the serine residue undergoes an oxidative deamination to produce ammonia and the pyruvoyl prosthetic group on the alpha chain.

The protein localises to the cell membrane. The catalysed reaction is a 1,2-diacyl-sn-glycero-3-phospho-L-serine + H(+) = a 1,2-diacyl-sn-glycero-3-phosphoethanolamine + CO2. It functions in the pathway phospholipid metabolism; phosphatidylethanolamine biosynthesis; phosphatidylethanolamine from CDP-diacylglycerol: step 2/2. Its function is as follows. Catalyzes the formation of phosphatidylethanolamine (PtdEtn) from phosphatidylserine (PtdSer). The protein is Phosphatidylserine decarboxylase proenzyme of Solidesulfovibrio magneticus (strain ATCC 700980 / DSM 13731 / RS-1) (Desulfovibrio magneticus).